The chain runs to 2123 residues: Bromodomain adjacent to zinc finger domain protein 2B (2123 aa).

Disordered regions lie at residues 1–129 (MESG…VNGT), 144–306 (TPAS…LSQQ), 357–402 (PSPD…EMGK), 473–534 (NENV…HPHP), 546–691 (RGTD…RRVA), 756–793 (RAMD…GSAE), and 937–960 (ARKK…LNKE). The segment covering 7–46 (LPSSPASSTTPTSSSAPSVASAVSKSSLSTGAASLSSTAS) has biased composition (low complexity). The segment covering 83–95 (FFPPLLGIPPLFA) has biased composition (pro residues). A compositionally biased stretch (polar residues) spans 100–116 (NHDSSFHSRTSGKSSRN). Low complexity-rich tracts occupy residues 147–157 (SSSMGQNQSTS) and 193–216 (ESSS…ISSS). Residues 217–243 (DSDDLEEEEEEDQSVEESEDDDSDSET) show a composition bias toward acidic residues. Residues 259–277 (SDPKTDGQKATEKAQERRT) are compositionally biased toward basic and acidic residues. Low complexity-rich tracts occupy residues 291–306 (PPFQ…LSQQ) and 366–379 (NKNT…LTSE). Positions 473 to 502 (NENVSSSTPFSSPVNLSTSGRRAPGSQTPA) are enriched in polar residues. Positions 546–559 (RGTDSDVPSSKDSE) are enriched in basic and acidic residues. Residues 560–587 (DSNEDEEEDDEEEDEEDDEDDESDDSQS) show a composition bias toward acidic residues. Residues 588–597 (ESDSNSQSDS) show a composition bias toward low complexity. Positions 598–615 (EGSEDDEEKDQEESDSDT) are enriched in acidic residues. Composition is skewed to low complexity over residues 628–637 (SSSAKSPPSS) and 671–683 (TSSS…PHSG). An MBD domain is found at 690 to 765 (VADDQELRIP…RAMDGRRGRP (76 aa)). Basic and acidic residues predominate over residues 756-778 (RAMDGRRGRPPNPDRPRAREESR). The region spanning 1004 to 1069 (GTTFSDCLMV…LSAAVCDPGL (66 aa)) is the DDT domain. Disordered regions lie at residues 1183–1260 (RDAS…QTAS), 1396–1444 (PPES…KTDA), 1499–1526 (TLVT…SSVQ), and 1588–1614 (FLTS…AQPV). The segment covering 1214–1238 (SDYDDDDDDDSDDQADEDEEDEEDK) has biased composition (acidic residues). The span at 1239 to 1248 (DDKKGKKTDI) shows a compositional bias: basic and acidic residues. Residues 1254–1281 (EGDQTASVEELEKQIEKLSKQQSQYRRK) adopt a coiled-coil conformation. Composition is skewed to polar residues over residues 1408–1422 (NVST…QNSG) and 1430–1444 (PSAT…KTDA). Pro residues predominate over residues 1505–1515 (SQPPSKSPSPA). A compositionally biased stretch (low complexity) spans 1588 to 1600 (FLTSSVASSKSDS). A PHD-type zinc finger spans residues 1886–1936 (KVYCQICRKGDNEELLLLCDGCDKGCHTYCHRPKITTIPDGDWFCPACISK). The disordered stretch occupies residues 1949–2013 (VKGKKTNDSK…AESTTSIKKP (65 aa)). Positions 1984–1995 (GSKELKKRKMEE) are enriched in basic and acidic residues. Polar residues predominate over residues 1996 to 2010 (TTSLNLSKAESTTSI). In terms of domain architecture, Bromo spans 2015 to 2119 (KDESRDLALC…KYFEKKWTDT (105 aa)).

The protein belongs to the WAL family. Component of the BRF-1 ISWI chromatin remodeling complex, at least composed of SMARCA1 and BAZ2B, which regulates the spacing of histone octamers on the DNA template to facilitate access to DNA. Within the BRF-1 ISWI chromatin remodeling complex interacts with SMARCA1; the interaction is direct. Component of the BRF-5 ISWI chromatin remodeling complex, at least composed of SMARCA5/SNF2H and BAZ2B, which regulates the spacing of histone octamers on the DNA template to facilitate access to DNA. Within the BRF-5 ISWI chromatin remodeling complex interacts with SMARCA5/SNF2H; the interaction is direct. Interacts with acetylated lysine residues on histone H1.4, H2A, H2B, H3 and H4 (in vitro). Interacts with EHMT1.

The protein localises to the nucleus. Functionally, regulatory subunit of the ATP-dependent BRF-1 and BRF-5 ISWI chromatin remodeling complexes, which form ordered nucleosome arrays on chromatin and facilitate access to DNA during DNA-templated processes such as DNA replication, transcription, and repair. Both complexes regulate the spacing of nucleosomes along the chromatin and have the ability to slide mononucleosomes to the center of a DNA template. The BRF-1 ISWI chromatin remodeling complex has a lower ATP hydrolysis rate than the BRF-5 ISWI chromatin remodeling complex. Chromatin reader protein, involved in positively modulating the rate of age-related behavioral deterioration. Represses the expression of mitochondrial function-related genes, perhaps by occupying their promoter regions, working in concert with histone methyltransferase EHMT1. The chain is Bromodomain adjacent to zinc finger domain protein 2B from Mus musculus (Mouse).